A 180-amino-acid polypeptide reads, in one-letter code: MTVFEGNLQDTRDLKFAIVIARFNDLVVGKLLSACEDSLRRHGVAVGPDSHQVDYAWVPGSFEIPMVARQLALSGRYDAIVCLGAVIRGQTSHYDHVASEVAKGIQALAFQTGVPVTFGVLTTDTMQQAIERAGIKSNLGWEYGENAIEMATLTRKIRHLVAVRAVQPELPEQTPPSLLQ.

5-amino-6-(D-ribitylamino)uracil-binding positions include Phe-23, 61–63 (SFE), and 85–87 (AVI). A (2S)-2-hydroxy-3-oxobutyl phosphate-binding site is contributed by 90-91 (QT). His-93 (proton donor) is an active-site residue. Phe-118 is a binding site for 5-amino-6-(D-ribitylamino)uracil. Arg-132 is a (2S)-2-hydroxy-3-oxobutyl phosphate binding site.

This sequence belongs to the DMRL synthase family.

It catalyses the reaction (2S)-2-hydroxy-3-oxobutyl phosphate + 5-amino-6-(D-ribitylamino)uracil = 6,7-dimethyl-8-(1-D-ribityl)lumazine + phosphate + 2 H2O + H(+). It participates in cofactor biosynthesis; riboflavin biosynthesis; riboflavin from 2-hydroxy-3-oxobutyl phosphate and 5-amino-6-(D-ribitylamino)uracil: step 1/2. Functionally, catalyzes the formation of 6,7-dimethyl-8-ribityllumazine by condensation of 5-amino-6-(D-ribitylamino)uracil with 3,4-dihydroxy-2-butanone 4-phosphate. This is the penultimate step in the biosynthesis of riboflavin. The chain is 6,7-dimethyl-8-ribityllumazine synthase from Gloeobacter violaceus (strain ATCC 29082 / PCC 7421).